A 481-amino-acid polypeptide reads, in one-letter code: Guanine nucleotide exchange factor C9orf72 homolog (481 aa).

Residues 23–194 (SPLLAATFAY…ELLASMRSHS (172 aa)) form the uDENN C9ORF72-type domain. A cDENN C9ORF72-type domain is found at 200-343 (DIADTVLNDD…SELTAFWRAT (144 aa)). In terms of domain architecture, dDENN C9ORF72-type spans 370 to 464 (VLHRDTLVKA…IKPGLHSFIF (95 aa)). Residues 461–481 (SFIFGRPFYTSVQERDVLMTF) form a required for the homodimerization of the C9orf72-SMCR8 complex region.

Component of the C9orf72-SMCR8 complex, at least composed of C9orf72, SMCR8 and WDR41. The complex is formed of two protomers, each individually consisting of one molecule each of C9orf72, SMCR8 and WDR41. The protomers homodimerize via an interaction between C9orf72 (via C-terminus) and SMCR8 (via N-terminus). Within each protomer SMCR8 (via DENN domain) acts as a bridging protein between WDR41 (via C-terminus and N-terminus) and C9orf72 (via C-terminus). The C9orf72-SMCR8 complex associates with the ULK1/ATG1 kinase complex. Interacts with ULK1/ATG1 kinase complex members ULK1, ATG13 and RB1CC1. Interacts with SMCR8; the interaction is direct. Interacts with HNRNPA1, HNRNPA2B1 and UBQLN2. Interacts with small Rab GTPase RAB1A; the interaction mediates recruitment of RAB1A to the ULK1/ATG1 kinase complex. Also interacts with small Rab GTPase RAB7A. Interacts with cofilin. Interacts with GTP-binding proteins ARF1 and ARF6. Interacts with the DLG4/PSD-95. Interacts with CARM1 (via PH domain-like fold). Interacts with RAB39A and RAB39B (in GDP-bound forms); functions as GEF for RAB39A and RAB39B.

It localises to the nucleus. The protein resides in the cytoplasm. Its subcellular location is the P-body. It is found in the stress granule. The protein localises to the endosome. It localises to the lysosome. The protein resides in the cytoplasmic vesicle. Its subcellular location is the autophagosome. It is found in the autolysosome. The protein localises to the secreted. It localises to the cell projection. The protein resides in the axon. Its subcellular location is the growth cone. It is found in the perikaryon. Functionally, acts as a guanine-nucleotide releasing factor (GEF) for Rab GTPases by promoting the conversion of inactive RAB-GDP to the active form RAB-GTP. Acts as a GEF for RAB39A which enables HOPS-mediated autophagosome-lysosome membrane tethering and fusion in mammalian autophagy. Component of the C9orf72-SMCR8 complex where both subunits display GEF activity and that regulates autophagy. As part of the C9orf72-SMCR8-WDR41 (CSW) complex, functions as GEF for RAB8A and RAB39B, thereby promoting autophagosome maturation. As part of the C9orf72-SMCR8 complex, also functions as GTPase activating protein (GAP) for RAB8A and RAB11A in vitro. The C9orf72-SMCR8 complex also acts as a regulator of autophagy initiation by interacting with the ULK1/ATG1 kinase complex and modulating its protein kinase activity. Promotes initiation of autophagy by regulating the RAB1A-dependent trafficking of the ULK1/ATG1 kinase complex to the phagophore which leads to autophagosome formation. Acts as a regulator of mTORC1 signaling by promoting phosphorylation of mTORC1 substrates. Plays a role in endosomal trafficking. May be involved in regulating the maturation of phagosomes to lysosomes. Promotes the lysosomal localization and lysosome-mediated degradation of CARM1 which leads to inhibition of starvation-induced lipid metabolism. Regulates actin dynamics in motor neurons by inhibiting the GTP-binding activity of ARF6, leading to ARF6 inactivation. This reduces the activity of the LIMK1 and LIMK2 kinases which are responsible for phosphorylation and inactivation of cofilin, leading to CFL1/cofilin activation. Positively regulates axon extension and axon growth cone size in spinal motor neurons. Required for SMCR8 protein expression and localization at pre- and post-synaptic compartments in the forebrain, also regulates protein abundance of RAB3A and GRIA1/GLUR1 in post-synaptic compartments in the forebrain and hippocampus. Plays a role within the hematopoietic system in restricting inflammation and the development of autoimmunity. This chain is Guanine nucleotide exchange factor C9orf72 homolog, found in Rattus norvegicus (Rat).